A 243-amino-acid polypeptide reads, in one-letter code: Mitochondrial import inner membrane translocase subunit TIM17-2 (243 aa).

4 consecutive transmembrane segments (helical) span residues 19–36, 66–83, 90–109, and 115–137; these read IGGA…FHFI, FAVW…MVYL, WNSI…RQGA, and SAIF…NKVL. 10 consecutive repeat copies span residues 149–151, 152–154, 155–157, 158–160, 161–163, 164–166, 167–169, 170–172, 173–175, and 176–178. The segment at 149-178 is 10 X approximate repeats GMQ/P; that stretch reads GMQGMPGMQGMQGMPGMPGMQGMPGMQGMQ. Residues 166 to 183 show a composition bias toward low complexity; it reads PGMQGMPGMQGMQMGQMQ. Positions 166–243 are disordered; the sequence is PGMQGMPGMQ…APPVPSFEFK (78 aa). The span at 184–198 shows a compositional bias: polar residues; sequence SQAQIRSESQNQNTA. The span at 211–228 shows a compositional bias: basic and acidic residues; sequence FDKKKEEVQPGSESKTEV.

This sequence belongs to the Tim17/Tim22/Tim23 family. In terms of assembly, component of the TIM17:23 complex at least composed of TIM23, TIM17 and TIM50. The complex interacts with the TIM44 component of the PAM complex. Interacts with TIM23-2. Expressed in roots, flowers, leaves and young cotyledons.

It is found in the mitochondrion inner membrane. It localises to the mitochondrion outer membrane. Functionally, essential component of the TIM17:23 complex, a complex that mediates the translocation of transit peptide-containing proteins across the mitochondrial inner membrane. Links the inner and outer membranes. The sequence is that of Mitochondrial import inner membrane translocase subunit TIM17-2 (TIM17-2) from Arabidopsis thaliana (Mouse-ear cress).